The following is a 48-amino-acid chain: uncharacterized protein (48 aa).

This is an uncharacterized protein from Mus musculus domesticus (western European house mouse).